The primary structure comprises 84 residues: Small ribosomal subunit protein uS17 (84 aa).

The protein belongs to the universal ribosomal protein uS17 family. In terms of assembly, part of the 30S ribosomal subunit.

One of the primary rRNA binding proteins, it binds specifically to the 5'-end of 16S ribosomal RNA. The protein is Small ribosomal subunit protein uS17 of Borreliella afzelii (strain PKo) (Borrelia afzelii).